A 66-amino-acid polypeptide reads, in one-letter code: Large ribosomal subunit protein bL32 (66 aa).

Basic residues predominate over residues 1–19 (MAVPKRKMSRSNTRARRSQ). The interval 1-20 (MAVPKRKMSRSNTRARRSQW) is disordered.

This sequence belongs to the bacterial ribosomal protein bL32 family.

The polypeptide is Large ribosomal subunit protein bL32 (Beutenbergia cavernae (strain ATCC BAA-8 / DSM 12333 / CCUG 43141 / JCM 11478 / NBRC 16432 / NCIMB 13614 / HKI 0122)).